A 361-amino-acid polypeptide reads, in one-letter code: DNA polymerase IV 3 (361 aa).

A UmuC domain is found at 12 to 192 (IIHVDMDAFY…LPVNKFHGVG (181 aa)). Positions 16 and 110 each coordinate Mg(2+). Residue Glu-111 is part of the active site.

It belongs to the DNA polymerase type-Y family. As to quaternary structure, monomer. Mg(2+) serves as cofactor.

It localises to the cytoplasm. It carries out the reaction DNA(n) + a 2'-deoxyribonucleoside 5'-triphosphate = DNA(n+1) + diphosphate. Its function is as follows. Poorly processive, error-prone DNA polymerase involved in untargeted mutagenesis. Copies undamaged DNA at stalled replication forks, which arise in vivo from mismatched or misaligned primer ends. These misaligned primers can be extended by PolIV. Exhibits no 3'-5' exonuclease (proofreading) activity. May be involved in translesional synthesis, in conjunction with the beta clamp from PolIII. In Mesorhizobium japonicum (strain LMG 29417 / CECT 9101 / MAFF 303099) (Mesorhizobium loti (strain MAFF 303099)), this protein is DNA polymerase IV 3 (dinB3).